The chain runs to 371 residues: Mannonate dehydratase (371 aa).

It belongs to the mannonate dehydratase family. Requires Fe(2+) as cofactor. Mn(2+) serves as cofactor.

It carries out the reaction D-mannonate = 2-dehydro-3-deoxy-D-gluconate + H2O. The protein operates within carbohydrate metabolism; pentose and glucuronate interconversion. Functionally, catalyzes the dehydration of D-mannonate. The polypeptide is Mannonate dehydratase (Geobacillus thermodenitrificans (strain NG80-2)).